The sequence spans 1037 residues: Ephrin type-A receptor 5 (1037 aa).

A signal peptide spans 1–24 (MRGSGPRGAGRRRPPSGGGDTPIT). The disordered stretch occupies residues 1-24 (MRGSGPRGAGRRRPPSGGGDTPIT). The Extracellular segment spans residues 25–573 (PASLAGCYSA…AASSDQSQIP (549 aa)). Residues 60 to 238 (EVNLLDSRTV…YYKKCPSVVR (179 aa)) form the Eph LBD domain. N-linked (GlcNAc...) asparagine glycans are attached at residues asparagine 264, asparagine 299, asparagine 369, asparagine 423, asparagine 436, and asparagine 461. Fibronectin type-III domains lie at 357-467 (PPSA…TNQA) and 468-562 (APSP…TTPV). Residues 574 to 594 (VIAVSVTVGVILLAVVIGVLL) traverse the membrane as a helical segment. Residues 595–1037 (SGSCCECGCG…VQLVNGMVPL (443 aa)) lie on the Cytoplasmic side of the membrane. 2 positions are modified to phosphotyrosine; by autocatalysis: tyrosine 650 and tyrosine 656. The 262-residue stretch at 675 to 936 (ITIERVIGAG…EIVNMLDKLI (262 aa)) folds into the Protein kinase domain. ATP contacts are provided by residues 681–689 (IGAGEFGEV) and lysine 707. Aspartate 800 acts as the Proton acceptor in catalysis. A phosphotyrosine; by autocatalysis mark is found at tyrosine 833 and tyrosine 982. Residues 965–1029 (GAYRSVGEWL…MNSLQEMKVQ (65 aa)) form the SAM domain. A PDZ-binding motif is present at residues 1035 to 1037 (VPL).

This sequence belongs to the protein kinase superfamily. Tyr protein kinase family. Ephrin receptor subfamily. Heterotetramer upon binding of the ligand. The heterotetramer is composed of an ephrin dimer and a receptor dimer. Oligomerization is probably required to induce biological responses. Interacts (via SAM domain) with SAMD5 (via SAM domain). In terms of processing, phosphorylated. Phosphorylation is stimulated by the ligand EFNA5. Dephosphorylation upon stimulation by glucose, inhibits EPHA5 forward signaling and results in insulin secretion. In terms of tissue distribution, almost exclusively expressed in the nervous system in cortical neurons, cerebellar Purkinje cells and pyramidal neurons within the cortex and hippocampus. Display an increasing gradient of expression from the forebrain to hindbrain and spinal cord.

It is found in the cell membrane. The protein resides in the cell projection. It localises to the axon. The protein localises to the dendrite. The enzyme catalyses L-tyrosyl-[protein] + ATP = O-phospho-L-tyrosyl-[protein] + ADP + H(+). Its function is as follows. Receptor tyrosine kinase which binds promiscuously GPI-anchored ephrin-A family ligands residing on adjacent cells, leading to contact-dependent bidirectional signaling into neighboring cells. The signaling pathway downstream of the receptor is referred to as forward signaling while the signaling pathway downstream of the ephrin ligand is referred to as reverse signaling. Among GPI-anchored ephrin-A ligands, EFNA5 most probably constitutes the cognate/functional ligand for EPHA5. Functions as an axon guidance molecule during development and may be involved in the development of the retinotectal, entorhino-hippocampal and hippocamposeptal pathways. Together with EFNA5 plays also a role in synaptic plasticity in adult brain through regulation of synaptogenesis. In addition to its function in the nervous system, the interaction of EPHA5 with EFNA5 mediates communication between pancreatic islet cells to regulate glucose-stimulated insulin secretion. This Homo sapiens (Human) protein is Ephrin type-A receptor 5 (EPHA5).